The following is a 115-amino-acid chain: Photosystem II reaction center Psb28 protein (115 aa).

Belongs to the Psb28 family. Part of the photosystem II complex.

It localises to the plastid. The protein resides in the chloroplast thylakoid membrane. The chain is Photosystem II reaction center Psb28 protein from Cyanidium caldarium (Red alga).